Consider the following 164-residue polypeptide: Lectin (164 aa).

A signal peptide spans 1–15 (TVATILTILASTCMA). The 110-residue stretch at 16-125 (RNVLVNNEGL…DIWSTGTYRK (110 aa)) folds into the Bulb-type lectin domain. The cysteines at positions 44 and 68 are disulfide-linked.

As to quaternary structure, homotetramer. Post-translationally, not glycosylated.

In terms of biological role, mannose-specific lectin. Induces a Th1-type immune response in vitro. Causes a 4-fold increase in the proliferation of murine thymocytes and a significant increase in the production of nitric oxide at 24 hours in a macrophage cell line. Stimulates the production of the pro-inflammatory cytokines TNF and IL12 by rat peritoneal macrophages in a dose-dependent manner and of the cytokines IFNG and IL2 in murine thymocytes. Has hemagglutination activity towards rabbit erythrocytes. The protein is Lectin of Allium cepa (Onion).